The sequence spans 134 residues: Alkaline proteinase inhibitor (134 aa).

An N-terminal signal peptide occupies residues 1-26 (MVFAAWYLKFAGFVALIFSIIGGSMA). A disulfide bridge links Cys-50 with Cys-73.

This sequence belongs to the protease inhibitor I38 family.

The protein localises to the periplasm. In terms of biological role, inhibitor of the alkaline protease. The protein is Alkaline proteinase inhibitor (inh) of Photorhabdus laumondii subsp. laumondii (strain DSM 15139 / CIP 105565 / TT01) (Photorhabdus luminescens subsp. laumondii).